Reading from the N-terminus, the 345-residue chain is NADPH dehydrogenase (345 aa).

23-26 serves as a coordination point for FMN; it reads SPMC. Tyr28 is a binding site for substrate. Ala60 and Gln102 together coordinate FMN. 164–167 contacts substrate; the sequence is HGAH. FMN contacts are provided by residues Arg215 and 307 to 308; that span reads GR.

The protein belongs to the NADH:flavin oxidoreductase/NADH oxidase family. NamA subfamily. As to quaternary structure, homotetramer. FMN serves as cofactor.

It carries out the reaction A + NADPH + H(+) = AH2 + NADP(+). In terms of biological role, catalyzes the reduction of the double bond of an array of alpha,beta-unsaturated aldehydes and ketones. It also reduces the nitro group of nitroester and nitroaromatic compounds. It could have a role in detoxification processes. This chain is NADPH dehydrogenase, found in Bacillus cereus (strain ATCC 14579 / DSM 31 / CCUG 7414 / JCM 2152 / NBRC 15305 / NCIMB 9373 / NCTC 2599 / NRRL B-3711).